The primary structure comprises 171 residues: Transcription antitermination protein NusB (171 aa).

This sequence belongs to the NusB family.

Its function is as follows. Involved in transcription antitermination. Required for transcription of ribosomal RNA (rRNA) genes. Binds specifically to the boxA antiterminator sequence of the ribosomal RNA (rrn) operons. In Brucella suis (strain ATCC 23445 / NCTC 10510), this protein is Transcription antitermination protein NusB.